The primary structure comprises 745 residues: Inhibitor of nuclear factor kappa-B kinase subunit alpha (745 aa).

A Protein kinase domain is found at 15 to 300; it reads WEMRERLGTG…IDLTLKQPRC (286 aa). ATP-binding positions include 21–29 and K44; that span reads LGTGGFGNV. The residue at position 23 (T23) is a Phosphothreonine; by PKB/AKT1 and SGK1. D144 functions as the Proton acceptor in the catalytic mechanism. A Phosphoserine; by MAP3K14 modification is found at S176. Residue S180 is modified to Phosphoserine; by SGK1. The leucine-zipper stretch occupies residues 455–476; sequence LLRYNANLTKMKNTLISASQQL. The tract at residues 738–743 is NEMO-binding; it reads LDWSWL.

Belongs to the protein kinase superfamily. Ser/Thr protein kinase family. I-kappa-B kinase subfamily. In terms of assembly, component of the I-kappa-B-kinase (IKK) core complex consisting of CHUK, IKBKB and IKBKG; probably four alpha/CHUK-beta/IKBKB dimers are associated with four gamma/IKBKG subunits. The IKK core complex seems to associate with regulatory or adapter proteins to form a IKK-signalosome holo-complex. The IKK complex associates with TERF2IP/RAP1, leading to promote IKK-mediated phosphorylation of RELA/p65. Part of a complex composed of NCOA2, NCOA3, CHUK/IKKA, IKBKB, IKBKG and CREBBP. Part of a 70-90 kDa complex at least consisting of CHUK/IKKA, IKBKB, NFKBIA, RELA, ELP1 and MAP3K14. Directly interacts with TRPC4AP. May interact with TRAF2. Interacts with NALP2. May interact with MAVS/IPS1. Interacts with ARRB1 and ARRB2. Interacts with NLRC5; prevents CHUK phosphorylation and kinase activity. Interacts with PIAS1; this interaction induces PIAS1 phosphorylation. Interacts with ZNF268 isoform 2; the interaction is further increased in a TNF-alpha-dependent manner. Interacts with LRRC14. Interacts with SASH1. Directly interacts with DDX3X after the physiological activation of the TLR7 and TLR8 pathways; this interaction enhances CHUK autophosphorylation. Ubiquitinated by TRIM56 via 'Lys-63'-linked ubiquitination, promoting activation of CHUK/IKKA. In terms of processing, phosphorylated by MAP3K14/NIK, AKT and to a lesser extent by MEKK1, and dephosphorylated by PP2A. Autophosphorylated. In terms of tissue distribution, ubiquitous only for isoform 1, isoforms 2 and 3 are expressed predominantly in brain and T-lymphocytes.

The protein localises to the cytoplasm. It is found in the nucleus. It catalyses the reaction L-seryl-[I-kappa-B protein] + ATP = O-phospho-L-seryl-[I-kappa-B protein] + ADP + H(+). Its activity is regulated as follows. Activated when phosphorylated and inactivated when dephosphorylated. Functionally, serine kinase that plays an essential role in the NF-kappa-B signaling pathway which is activated by multiple stimuli such as inflammatory cytokines, bacterial or viral products, DNA damages or other cellular stresses. Acts as a part of the canonical IKK complex in the conventional pathway of NF-kappa-B activation and phosphorylates inhibitors of NF-kappa-B on serine residues. These modifications allow polyubiquitination of the inhibitors and subsequent degradation by the proteasome. In turn, free NF-kappa-B is translocated into the nucleus and activates the transcription of hundreds of genes involved in immune response, growth control, or protection against apoptosis. Negatively regulates the pathway by phosphorylating the scaffold protein TAXBP1 and thus promoting the assembly of the A20/TNFAIP3 ubiquitin-editing complex (composed of A20/TNFAIP3, TAX1BP1, and the E3 ligases ITCH and RNF11). Therefore, CHUK plays a key role in the negative feedback of NF-kappa-B canonical signaling to limit inflammatory gene activation. As part of the non-canonical pathway of NF-kappa-B activation, the MAP3K14-activated CHUK/IKKA homodimer phosphorylates NFKB2/p100 associated with RelB, inducing its proteolytic processing to NFKB2/p52 and the formation of NF-kappa-B RelB-p52 complexes. In turn, these complexes regulate genes encoding molecules involved in B-cell survival and lymphoid organogenesis. Also participates in the negative feedback of the non-canonical NF-kappa-B signaling pathway by phosphorylating and destabilizing MAP3K14/NIK. Within the nucleus, phosphorylates CREBBP and consequently increases both its transcriptional and histone acetyltransferase activities. Modulates chromatin accessibility at NF-kappa-B-responsive promoters by phosphorylating histones H3 at 'Ser-10' that are subsequently acetylated at 'Lys-14' by CREBBP. Additionally, phosphorylates the CREBBP-interacting protein NCOA3. Also phosphorylates FOXO3 and may regulate this pro-apoptotic transcription factor. Phosphorylates RIPK1 at 'Ser-25' which represses its kinase activity and consequently prevents TNF-mediated RIPK1-dependent cell death. Phosphorylates AMBRA1 following mitophagy induction, promoting AMBRA1 interaction with ATG8 family proteins and its mitophagic activity. The sequence is that of Inhibitor of nuclear factor kappa-B kinase subunit alpha (Chuk) from Mus musculus (Mouse).